The primary structure comprises 246 residues: MRNFYSYNPTIGRTYVYDNKFYKNLGSVIKNAKRKQHLIEHLKEEKQLDPLDTFMVAEDPFLGPGKNQKLTLFKEVRNVKPDTMKLVVNWSGKEFLRETWTRFMEDSFPIVNDQEVMDIFLEANLKPTRPNRCYRFLAQHALRCDPDYVPHEVIRIVEPDYVGVGNEYRISLAKRGGGCPIMNLNSEYNNSFESFIERVIWENFYRNNVYIGTDSAEEEEILLELSLLFKVKEFAPDIPLYSGPAY.

It belongs to the polyhedrin family.

In terms of biological role, major component of the virus occlusion bodies, which are large proteinaceous structures (polyhedra), that protect the virus from the outside environment for extended periods until they are ingested by insect larvae. The chain is Polyhedrin (PH) from Lepidoptera (butterflies and moths).